The following is a 369-amino-acid chain: Anhydro-N-acetylmuramic acid kinase (369 aa).

12 to 19 (GTSMDGVD) lines the ATP pocket.

Belongs to the anhydro-N-acetylmuramic acid kinase family.

The catalysed reaction is 1,6-anhydro-N-acetyl-beta-muramate + ATP + H2O = N-acetyl-D-muramate 6-phosphate + ADP + H(+). Its pathway is amino-sugar metabolism; 1,6-anhydro-N-acetylmuramate degradation. It functions in the pathway cell wall biogenesis; peptidoglycan recycling. Functionally, catalyzes the specific phosphorylation of 1,6-anhydro-N-acetylmuramic acid (anhMurNAc) with the simultaneous cleavage of the 1,6-anhydro ring, generating MurNAc-6-P. Is required for the utilization of anhMurNAc either imported from the medium or derived from its own cell wall murein, and thus plays a role in cell wall recycling. The chain is Anhydro-N-acetylmuramic acid kinase from Shewanella loihica (strain ATCC BAA-1088 / PV-4).